Consider the following 719-residue polypeptide: Putative alpha-1,3-mannosyltransferase MNT4 (719 aa).

Topologically, residues 1–4 are cytoplasmic; that stretch reads MKFH. The chain crosses the membrane as a helical span at residues 5-22; that stretch reads LKRYVIVTSILLSFFLLF. Residues 23–719 are Lumenal-facing; it reads RRQFLPLTQR…KKLIEIWLQD (697 aa). Residues N148, N273, and N449 are each glycosylated (N-linked (GlcNAc...) asparagine).

The protein belongs to the MNN1/MNT family.

The protein localises to the golgi apparatus membrane. Its pathway is protein modification; protein glycosylation. In terms of biological role, responsible for addition of the terminal mannose residues to the outer chain of core N-linked polysaccharides and to O-linked mannotriose. Implicated in late Golgi modifications. The protein is Putative alpha-1,3-mannosyltransferase MNT4 (MNT4) of Candida albicans (strain SC5314 / ATCC MYA-2876) (Yeast).